Reading from the N-terminus, the 887-residue chain is Kinesin-like protein KIF20A (887 aa).

An N-acetylserine modification is found at Ser2. 3 positions are modified to phosphoserine: Ser7, Ser14, and Ser21. A Kinesin motor domain is found at 63–506 (KVKVYLRIRP…AKFSALASQL (444 aa)). 159–166 (GVTNSGKT) is a binding site for ATP. Ser527 is subject to Phosphoserine; by PLK1. Positions 527–553 (SPQVGPGLEKEDKADSDLEDSPEDEAD) are disordered. Over residues 543 to 553 (DLEDSPEDEAD) the composition is skewed to acidic residues. Positions 559 to 804 (KEELLQVVEA…VLVKLDLQKK (246 aa)) form a coiled coil. 2 positions are modified to phosphoserine: Ser683 and Ser823. The segment at 805–887 (AACIAEQYHT…LLKSPFGKKY (83 aa)) is globular. The tract at residues 826 to 875 (KRLGANQENQQPNHQPPGKKPFLRNLLPRTPTCQSSTDSSPYARILRSRH) is disordered. At Thr855 the chain carries Phosphothreonine. The span at 856-865 (PTCQSSTDSS) shows a compositional bias: polar residues. Phosphoserine is present on residues Ser865, Ser876, and Ser881.

Belongs to the TRAFAC class myosin-kinesin ATPase superfamily. Kinesin family. In terms of processing, phosphorylated by PLK1 at Ser-527 during mitosis, creating a docking site for PLK1 and recruiting PLK1 at central spindle. Ubiquitously expressed, with highest levels in spleen and testis.

Its subcellular location is the golgi apparatus. The protein resides in the cytoplasm. The protein localises to the cytoskeleton. It is found in the spindle. Its function is as follows. Mitotic kinesin required for chromosome passenger complex (CPC)-mediated cytokinesis. Following phosphorylation by PLK1, involved in recruitment of PLK1 to the central spindle. Interacts with guanosine triphosphate (GTP)-bound forms of RAB6A and RAB6B. May act as a motor required for the retrograde RAB6 regulated transport of Golgi membranes and associated vesicles along microtubules. Has a microtubule plus end-directed motility. This Mus musculus (Mouse) protein is Kinesin-like protein KIF20A (Kif20a).